The primary structure comprises 202 residues: Probable adenylyl-sulfate kinase (202 aa).

ATP is bound at residue 36-43 (GLSGSGKS). The active-site Phosphoserine intermediate is the S110.

The protein belongs to the APS kinase family.

The catalysed reaction is adenosine 5'-phosphosulfate + ATP = 3'-phosphoadenylyl sulfate + ADP + H(+). Its pathway is sulfur metabolism; hydrogen sulfide biosynthesis; sulfite from sulfate: step 2/3. Functionally, catalyzes the synthesis of activated sulfate. This chain is Probable adenylyl-sulfate kinase, found in Halalkalibacterium halodurans (strain ATCC BAA-125 / DSM 18197 / FERM 7344 / JCM 9153 / C-125) (Bacillus halodurans).